The following is a 171-amino-acid chain: MKEKLTHFKVGQIVNTQGLKGEVRVYPLTDDIERFDELKDFYLGKDLNNKLAVEKVRYKGSMVIMKIKGIDSIEKAEKLKNKFMYVSREDSRELEEGEFFIADMIGMEVLTVDGKYVGILEDVLQYSANDVYVVKGEEDKEFMIPAIKKFVPTIDIDERKMIIDPIKGMID.

Residues 96-169 (EGEFFIADMI…KMIIDPIKGM (74 aa)) enclose the PRC barrel domain.

Belongs to the RimM family. In terms of assembly, binds ribosomal protein uS19.

The protein resides in the cytoplasm. An accessory protein needed during the final step in the assembly of 30S ribosomal subunit, possibly for assembly of the head region. Essential for efficient processing of 16S rRNA. May be needed both before and after RbfA during the maturation of 16S rRNA. It has affinity for free ribosomal 30S subunits but not for 70S ribosomes. This chain is Ribosome maturation factor RimM, found in Clostridioides difficile (strain 630) (Peptoclostridium difficile).